A 51-amino-acid polypeptide reads, in one-letter code: Ovomucoid (51 aa).

The 49-residue stretch at 3–51 (VDCSGYPKPACTLEYFPLCGSDNQTYANKCAFCNAVVEKNVTLRHLGKC) folds into the Kazal-like domain. 3 disulfides stabilise this stretch: Cys5-Cys35, Cys13-Cys32, and Cys21-Cys51. Residue Asn42 is glycosylated (N-linked (GlcNAc...) asparagine).

The protein localises to the secreted. The protein is Ovomucoid of Nothoprocta cinerascens (Brushland tinamou).